Consider the following 309-residue polypeptide: NAD kinase 2 (309 aa).

Aspartate 81 (proton acceptor) is an active-site residue. NAD(+) contacts are provided by residues 81 to 82, 155 to 156, aspartate 185, 196 to 201, and asparagine 255; these read DG, NE, and TAYALS.

The protein belongs to the NAD kinase family. A divalent metal cation serves as cofactor.

It is found in the cytoplasm. The enzyme catalyses NAD(+) + ATP = ADP + NADP(+) + H(+). In terms of biological role, involved in the regulation of the intracellular balance of NAD and NADP, and is a key enzyme in the biosynthesis of NADP. Catalyzes specifically the phosphorylation on 2'-hydroxyl of the adenosine moiety of NAD to yield NADP. In Gloeobacter violaceus (strain ATCC 29082 / PCC 7421), this protein is NAD kinase 2.